Here is a 1116-residue protein sequence, read N- to C-terminus: Ubiquitin C-terminal hydrolase 12 (1116 aa).

Residues 1 to 10 (MTMMTPPPVD) are compositionally biased toward pro residues. The interval 1–52 (MTMMTPPPVDQPEDEEMLVPNSDLVDGPAQPMEVTQPETAASTVENQPAEDP) is disordered. Polar residues predominate over residues 36 to 46 (QPETAASTVEN). The region spanning 54-179 (TLKFTWTIPN…NDTVLVEAEV (126 aa)) is the MATH domain. The region spanning 199-524 (VGLKNQGATC…NAYMLVYIRE (326 aa)) is the USP domain. C208 serves as the catalytic Nucleophile. H455 (proton acceptor) is an active-site residue.

This sequence belongs to the peptidase C19 family. In terms of assembly, interacts with SIC/RON3.

It carries out the reaction Thiol-dependent hydrolysis of ester, thioester, amide, peptide and isopeptide bonds formed by the C-terminal Gly of ubiquitin (a 76-residue protein attached to proteins as an intracellular targeting signal).. In terms of biological role, recognizes and hydrolyzes the peptide bond at the C-terminal Gly of ubiquitin. Involved in the processing of poly-ubiquitin precursors as well as that of ubiquitinated proteins. Positive regulator of root meristem development that, together with UBP13, prevents the ubiquitination and turnover of RGFR1 induced by the RGF1 hormone peptide, thus influencing PLT1 and PLT2 expression. The chain is Ubiquitin C-terminal hydrolase 12 from Arabidopsis thaliana (Mouse-ear cress).